Consider the following 839-residue polypeptide: Lon protease (839 aa).

The Lon N-terminal domain occupies 31–224; that stretch reads LFLIPIKSRP…KVLLFLKKEI (194 aa). 377–384 provides a ligand contact to ATP; that stretch reads GPPGVGKT. The region spanning 613–790 is the Lon proteolytic domain; that stretch reads ASVPGTALGL…EEVALLLFDE (178 aa). Active-site residues include Ser-696 and Lys-739. Residues 807–839 form a disordered region; that stretch reads IVNPTRKLSPKKKTTQKQKLSLSKQKGNNQKKK. A compositionally biased stretch (low complexity) spans 823-832; it reads KQKLSLSKQK.

The protein belongs to the peptidase S16 family. As to quaternary structure, homohexamer. Organized in a ring with a central cavity.

Its subcellular location is the cytoplasm. It carries out the reaction Hydrolysis of proteins in presence of ATP.. In terms of biological role, ATP-dependent serine protease that mediates the selective degradation of mutant and abnormal proteins as well as certain short-lived regulatory proteins. Required for cellular homeostasis and for survival from DNA damage and developmental changes induced by stress. Degrades polypeptides processively to yield small peptide fragments that are 5 to 10 amino acids long. Binds to DNA in a double-stranded, site-specific manner. The sequence is that of Lon protease from Leptospira interrogans serogroup Icterohaemorrhagiae serovar copenhageni (strain Fiocruz L1-130).